Consider the following 144-residue polypeptide: 3-hydroxyacyl-[acyl-carrier-protein] dehydratase FabZ (144 aa).

H51 is an active-site residue.

The protein belongs to the thioester dehydratase family. FabZ subfamily.

The protein resides in the cytoplasm. It catalyses the reaction a (3R)-hydroxyacyl-[ACP] = a (2E)-enoyl-[ACP] + H2O. Its function is as follows. Involved in unsaturated fatty acids biosynthesis. Catalyzes the dehydration of short chain beta-hydroxyacyl-ACPs and long chain saturated and unsaturated beta-hydroxyacyl-ACPs. The polypeptide is 3-hydroxyacyl-[acyl-carrier-protein] dehydratase FabZ (Lactococcus lactis subsp. cremoris (strain MG1363)).